The sequence spans 282 residues: tRNA pseudouridine synthase A (282 aa).

D53 (nucleophile) is an active-site residue. Y119 is a substrate binding site.

Belongs to the tRNA pseudouridine synthase TruA family. Homodimer.

It catalyses the reaction uridine(38/39/40) in tRNA = pseudouridine(38/39/40) in tRNA. Its function is as follows. Formation of pseudouridine at positions 38, 39 and 40 in the anticodon stem and loop of transfer RNAs. The chain is tRNA pseudouridine synthase A from Corynebacterium efficiens (strain DSM 44549 / YS-314 / AJ 12310 / JCM 11189 / NBRC 100395).